A 292-amino-acid chain; its full sequence is NIF3-like protein 1 (292 aa).

It belongs to the GTP cyclohydrolase I type 2/NIF3 family.

This chain is NIF3-like protein 1 (anon-35F/36A), found in Drosophila melanogaster (Fruit fly).